Reading from the N-terminus, the 99-residue chain is Large ribosomal subunit protein uL23 (99 aa).

It belongs to the universal ribosomal protein uL23 family. Part of the 50S ribosomal subunit. Contacts protein L29, and trigger factor when it is bound to the ribosome.

Its function is as follows. One of the early assembly proteins it binds 23S rRNA. One of the proteins that surrounds the polypeptide exit tunnel on the outside of the ribosome. Forms the main docking site for trigger factor binding to the ribosome. This Shewanella sediminis (strain HAW-EB3) protein is Large ribosomal subunit protein uL23.